We begin with the raw amino-acid sequence, 175 residues long: uncharacterized protein (175 aa).

Belongs to the asfivirus B175L family.

This is an uncharacterized protein from Ornithodoros (relapsing fever ticks).